The chain runs to 430 residues: Glutamate-1-semialdehyde 2,1-aminomutase (430 aa).

Position 267 is an N6-(pyridoxal phosphate)lysine (Lys-267).

This sequence belongs to the class-III pyridoxal-phosphate-dependent aminotransferase family. HemL subfamily. In terms of assembly, homodimer. Requires pyridoxal 5'-phosphate as cofactor.

It is found in the cytoplasm. It catalyses the reaction (S)-4-amino-5-oxopentanoate = 5-aminolevulinate. Its pathway is porphyrin-containing compound metabolism; protoporphyrin-IX biosynthesis; 5-aminolevulinate from L-glutamyl-tRNA(Glu): step 2/2. In Anaeromyxobacter dehalogenans (strain 2CP-1 / ATCC BAA-258), this protein is Glutamate-1-semialdehyde 2,1-aminomutase.